The sequence spans 301 residues: Ribonuclease Z (301 aa).

H63, H65, D67, H68, H141, D204, and H262 together coordinate Zn(2+). D67 acts as the Proton acceptor in catalysis.

Belongs to the RNase Z family. In terms of assembly, homodimer. It depends on Zn(2+) as a cofactor.

The catalysed reaction is Endonucleolytic cleavage of RNA, removing extra 3' nucleotides from tRNA precursor, generating 3' termini of tRNAs. A 3'-hydroxy group is left at the tRNA terminus and a 5'-phosphoryl group is left at the trailer molecule.. Zinc phosphodiesterase, which displays some tRNA 3'-processing endonuclease activity. Probably involved in tRNA maturation, by removing a 3'-trailer from precursor tRNA. The sequence is that of Ribonuclease Z from Streptomyces avermitilis (strain ATCC 31267 / DSM 46492 / JCM 5070 / NBRC 14893 / NCIMB 12804 / NRRL 8165 / MA-4680).